Reading from the N-terminus, the 236-residue chain is Small ribosomal subunit protein uS3 (236 aa).

The KH type-2 domain maps to 39-107 (VRQFLTKELK…PAQINISEVR (69 aa)).

This sequence belongs to the universal ribosomal protein uS3 family. In terms of assembly, part of the 30S ribosomal subunit. Forms a tight complex with proteins S10 and S14.

Binds the lower part of the 30S subunit head. Binds mRNA in the 70S ribosome, positioning it for translation. This chain is Small ribosomal subunit protein uS3, found in Aeromonas salmonicida (strain A449).